Here is a 1136-residue protein sequence, read N- to C-terminus: Collagen alpha-1(XIX) chain (1136 aa).

Positions 1 to 23 (MRHTGSWKLWTWVTTFLLPACTC) are cleaved as a signal peptide. A glycan (N-linked (GlcNAc...) asparagine) is linked at Asn47. The region spanning 47–231 (NKSELSGFDL…LHQLRIYCNA (185 aa)) is the Laminin G-like domain. Disordered regions lie at residues 252-272 (DFGS…SSYL), 289-673 (EEAG…PGDP), 699-1005 (GLKS…TPAD), and 1043-1136 (SAQA…AGGK). Residues 254-266 (GSTTSSWGTSNTG) are compositionally biased toward low complexity. The tract at residues 289–348 (EEAGLPGTLRSIGHKGDKGEPGEHGLDGTPGLPGQKGEQGLEGIKGEIGEKGEPGAKGDS) is triple-helical region 1 (COL1). 3 consecutive Collagen-like domains span residues 292–346 (GLPG…GAKG), 347–388 (DSGL…ALTG), and 389–430 (SIGI…GLQG). 2 stretches are compositionally biased toward basic and acidic residues: residues 302–314 (HKGD…EHGL) and 332–344 (IKGE…EPGA). The interval 367-426 (GPPGPKGDKGDMGPPGPPALTGSIGIQGPQGPPGKEGQRGRRGKTGPPGNPGPPGPPGPP) is triple-helical region 2 (COL2). Residues 387 to 401 (TGSIGIQGPQGPPGK) are compositionally biased toward low complexity. A compositionally biased stretch (pro residues) spans 414–426 (PGNPGPPGPPGPP). Over residues 428-437 (LQGLQQPFGG) the composition is skewed to low complexity. The tract at residues 442–682 (GTGEHGASGP…PIALPLLGDI (241 aa)) is triple-helical region 3 (COL3). Basic and acidic residues predominate over residues 472–490 (HKGEPGEPLTKGEKGDRGE). Low complexity-rich tracts occupy residues 511–523 (LLGS…QQGP) and 567–577 (PGLKGDAGPPG). Collagen-like domains lie at 519–577 (GQQG…GPPG), 578–618 (ISLP…GPPG), 620–673 (GIPG…PGDP), 722–777 (KGDV…GPPG), 778–810 (LTGR…GPPG), and 833–891 (GYPG…APGP). Residues 634–645 (PGIQGPRGLPGL) show a composition bias toward low complexity. Residues 694-812 (QANVPGLKSI…PGPPGPPGVP (119 aa)) form a triple-helical region 4 (COL4) region. Composition is skewed to basic and acidic residues over residues 714-725 (GKYDPAARKGDV) and 737-758 (EGPK…KGDE). Residues 764–788 (PGLSGAPGPTGPPGLTGRTGHPGPT) are compositionally biased toward low complexity. 2 stretches are compositionally biased toward pro residues: residues 800–811 (PGKPGPPGPPGV) and 834–846 (YPGP…PKGD). Positions 827–1006 (GGVNVPGYPG…PGIPGTPADA (180 aa)) are triple-helical region 5 (COL5). The span at 877-886 (PGIAGISGKP) shows a compositional bias: low complexity. A compositionally biased stretch (basic and acidic residues) spans 937–948 (PGDRGPKGERGD). Positions 946–948 (RGD) match the Cell attachment site motif. A triple-helical region 6 (COL6) region spans residues 1048 to 1105 (GRPGPPGKDGLPGPPGDPGPQGYRGQKGERGEPGIGLPGSPGLPGSSAVGLPGSPGAP). Residues 1087-1101 (SPGLPGSSAVGLPGS) show a composition bias toward low complexity. The segment covering 1102-1113 (PGAPGPQGPPGP) has biased composition (pro residues).

Belongs to the fibril-associated collagens with interrupted helices (FACIT) family. In terms of assembly, oligomer; disulfide-linked. In terms of processing, prolines at the third position of the tripeptide repeating unit (G-X-Y) are hydroxylated in some or all of the chains.

The protein resides in the secreted. Its subcellular location is the extracellular space. It localises to the extracellular matrix. In terms of biological role, may act as a cross-bridge between fibrils and other extracellular matrix molecules. Involved in skeletal myogenesis in the developing esophagus. May play a role in organization of the pericellular matrix or the sphinteric smooth muscle. The chain is Collagen alpha-1(XIX) chain from Mus musculus (Mouse).